Consider the following 376-residue polypeptide: Putative glutamate--cysteine ligase 2-3 (376 aa).

This sequence belongs to the glutamate--cysteine ligase type 2 family. YbdK subfamily.

The catalysed reaction is L-cysteine + L-glutamate + ATP = gamma-L-glutamyl-L-cysteine + ADP + phosphate + H(+). Functionally, ATP-dependent carboxylate-amine ligase which exhibits weak glutamate--cysteine ligase activity. The sequence is that of Putative glutamate--cysteine ligase 2-3 from Nocardioides sp. (strain ATCC BAA-499 / JS614).